The primary structure comprises 3704 residues: Fatty acid synthase 2 (3704 aa).

The segment covering 27-41 has biased composition (low complexity); it reads AVSAHGSPPSSASPG. The interval 27-52 is disordered; sequence AVSAHGSPPSSASPGPDDKAFSVDGT. The acetyltransferase (AT) domain stretch occupies residues 216–475; sequence ALFGGQGNNH…QARIPFSKRK (260 aa). An enoyl reductase (ER) domain region spans residues 639-887; sequence SRLLGKPPIM…LIASTQGCSD (249 aa). The segment at 1216-1709 is dehydratase (DH) domain; sequence GEQPSWIRAL…VPGDQLSVQL (494 aa). In terms of domain architecture, MaoC-like spans 1624-1730; the sequence is PKTNEPYSRA…VQIDASNQRG (107 aa). The interval 1747 to 2112 is malonyl/palmitoyl transferase (MT/PT) domain; the sequence is YVFTGQGSQA…IEHVSEVTRS (366 aa). Residues 2265–2343 form the Carrier domain; the sequence is DERLDPLLTV…AALRPGYSGE (79 aa). Serine 2303 bears the O-(pantetheine 4'-phosphoryl)serine mark. Residues 2733 to 2969 are ketoreductase (KR) domain; that stretch reads GLDVLLTGVG…LGLVEPEFAS (237 aa). A Ketosynthase family 3 (KS3) domain is found at 3176 to 3623; that stretch reads QQEIELTHDL…QVGGIAMILH (448 aa). Residues cysteine 3359, histidine 3506, and histidine 3547 each act as for beta-ketoacyl synthase activity in the active site.

The protein in the N-terminal section; belongs to the fungal fatty acid synthetase subunit beta family. It in the C-terminal section; belongs to the thiolase-like superfamily. Fungal fatty acid synthetase subunit alpha family.

Its pathway is secondary metabolite biosynthesis. Functionally, fatty acid synthase; part of the gene cluster that mediates the biosynthesis of the glycolipid biosurfactant ustilagic acid (UA). UA is a secreted cellobiose glycolipid that is toxic for many microorganisms and confers biocontrol activity to U.maydis. UA consists of 15,16-dihydroxypalmitic or 2,15,16-trihydroxypalmitic acid, which is O-glycosidically linked to cellobiose at its terminal hydroxyl group. In addition, the cellobiose moiety is acetylated and acylated with a short-chain hydroxy fatty acid. UA biosynthesis starts with omega-hydroxylation of palmitic acid catalyzed by the cytochrome P450 monooxygenase cyp1. Terminal hydroxylation of palmitic acid precedes subterminal hydroxylation catalyzed by the cytochrome P450 monooxygenase cyp2. Sequential glucosylation of the hydroxy fatty acid is probably catalyzed by the glycosyltransferase ugt1. The cellobiose lipid is further decorated by acetylation of the proximal glucose residue and by acylation with a short-chain beta-hydroxy fatty acid at the distal glucose residue. The acyltransferase uat1 may be a good candidate for catalyzing either acetylation or acylation of the cellobiose lipid. The fatty acid synthase fas2 may be involved in synthesis of the carbon backbone of the short-chain beta-hydroxy fatty acid esterified to the cellobiose disaccharide. The secreted UA consists of a mixture of both alpha-hydroxylated and non-hydroxylated glycolipids; therefore, alpha-hydroxylation of the long-chain fatty, catalyzed by the fatty acid hydroxylase ahd1, occurs late in UA biosynthesis and may be the last step before secretion. The chain is Fatty acid synthase 2 from Mycosarcoma maydis (Corn smut fungus).